Consider the following 348-residue polypeptide: Neuronal growth regulator 1 (348 aa).

The signal sequence occupies residues 1–31; it reads MVLLAQGACCSNQWLAAVLLSLCSCLPAGQS. 3 Ig-like C2-type domains span residues 32–128, 133–215, and 219–307; these read VDFP…VHLT, PKIY…RVIV, and PTIQ…LPLN. An intrachain disulfide couples C54 to C112. N67 and N149 each carry an N-linked (GlcNAc...) asparagine glycan. Cystine bridges form between C154/C197 and C239/C291. Residue Y181 is modified to Phosphotyrosine. N-linked (GlcNAc...) asparagine glycans are attached at residues N269, N280, N288, and N301. G318 carries GPI-anchor amidated glycine lipidation. A propeptide spans 319–348 (removed in mature form); that stretch reads SACDLFSCWSLALTLSSVISIFYLKNAILQ.

This sequence belongs to the immunoglobulin superfamily. IgLON family. As to expression, expressed in brain.

It is found in the cell membrane. Its function is as follows. May be involved in cell-adhesion. May function as a trans-neural growth-promoting factor in regenerative axon sprouting in the mammalian brain. The polypeptide is Neuronal growth regulator 1 (Negr1) (Mus musculus (Mouse)).